The primary structure comprises 129 residues: Ergosterol biosynthetic protein 28 (129 aa).

4 consecutive transmembrane segments (helical) span residues 4-24 (LGYWLMVVGSLRLASVWFGFF), 46-66 (TFGVWTLLTCTLCFLCAFNLE), 71-91 (YLATFLSFIYALGHFLTEYLF), and 96-116 (TIANLSTVGFFAGTSIVWMLL).

This sequence belongs to the ERG28 family.

The protein localises to the endoplasmic reticulum membrane. This Arabidopsis thaliana (Mouse-ear cress) protein is Ergosterol biosynthetic protein 28.